The sequence spans 601 residues: MENQAHTTAGASPCEAELQELMEQIDIMVSNKKLDWERKMRALETRLDLRDQELANAQTCLDQKGQEVGLLRQKLDSLEKCNLVMTQNYEGQLQTLKAQFSKLTSNFEKLRLHQMKQNQIHRKESSSKEELPFELSSLNQKLEEFRAKSREWDKQEVLYQTHLVSLDAQQKLLSEKCSQFQKQAQNYQTQLNGKKQCAEDSSSEIPRLVCESDPGCEATQRDEFIIEKLKSAVSEIALSRNKLQDENQKLLQELKMYQRQCQAMEAGLSEVKSELQSRDDLLRIIEMERLHLHRELLRMGEVQTAQDNRKRVESSYSPSPKEAERKRKELFPMVSDQPNHEKELSKMRSQLYQEEGLCSEQERLRSEISELTQELHQKEVTIATVMKKAALLERQLKIELEIKERMLAKQQVSDRRYKAVRTENTHLKGMMGDLDPARYLAVDLSNKKHSQCTSINKLEYENERLRSDLAKLHGNGKAAWPNQSSYGEAGAYVFQSQLKTETSGDRISQDCELNRSPTPLSPLPFQTKEMASPLVGDNEVLALSPPDISFRASLAAQHFLMEEERRAKELEKLLNTHIDELQRHTEFTLNKYTKLKQSRHI.

3 coiled-coil regions span residues 14 to 59, 86 to 196, and 226 to 277; these read CEAE…NAQT, TQNY…GKKQ, and IEKL…ELQS. The interval 305 to 329 is disordered; sequence AQDNRKRVESSYSPSPKEAERKRKE. The stretch at 354-397 forms a coiled coil; the sequence is EEGLCSEQERLRSEISELTQELHQKEVTIATVMKKAALLERQLK. Residue Ser544 is modified to Phosphoserine. Residues 555–586 are a coiled coil; that stretch reads AAQHFLMEEERRAKELEKLLNTHIDELQRHTE.

Belongs to the CEP63 family. Interacts with CEP152; the interaction is mutually exclusive with CEP63. Highly enriched in multicilia-abundant tissues (trachea and oviduct).

The protein resides in the cytoplasm. Its function is as follows. Key structural component of the deuterosome, a structure that promotes de novo centriole amplification in multiciliated cells. Deuterosome-mediated centriole amplification occurs in terminally differentiated multiciliated cells and can generate more than 100 centrioles. Probably sufficient for the specification and formation of the deuterosome inner core. Interacts with CEP152 and recruits PLK4 to activate centriole biogenesis. In Mus musculus (Mouse), this protein is Deuterosome assembly protein 1.